A 337-amino-acid chain; its full sequence is Probable allantoicase 1 (337 aa).

This sequence belongs to the allantoicase family.

The enzyme catalyses allantoate + H2O = (S)-ureidoglycolate + urea. It participates in nitrogen metabolism; (S)-allantoin degradation; (S)-ureidoglycolate from allantoate (aminidohydrolase route): step 1/1. The sequence is that of Probable allantoicase 1 from Burkholderia mallei (strain ATCC 23344).